Here is a 263-residue protein sequence, read N- to C-terminus: Endonuclease 8 (263 aa).

The active-site Schiff-base intermediate with DNA is the Pro-2. The active-site Proton donor is the Glu-3. Lys-53 (proton donor; for beta-elimination activity) is an active-site residue. Residues Gln-70, Arg-125, and Asn-169 each coordinate DNA. The FPG-type zinc-finger motif lies at 229–263 (KVFHRDGERCERCGGIIEKTTLSSRPFYWCPGCQH). Catalysis depends on Arg-253, which acts as the Proton donor; for delta-elimination activity.

This sequence belongs to the FPG family. Zn(2+) is required as a cofactor.

The enzyme catalyses 2'-deoxyribonucleotide-(2'-deoxyribose 5'-phosphate)-2'-deoxyribonucleotide-DNA = a 3'-end 2'-deoxyribonucleotide-(2,3-dehydro-2,3-deoxyribose 5'-phosphate)-DNA + a 5'-end 5'-phospho-2'-deoxyribonucleoside-DNA + H(+). Involved in base excision repair of DNA damaged by oxidation or by mutagenic agents. Acts as a DNA glycosylase that recognizes and removes damaged bases. Has a preference for oxidized pyrimidines, such as thymine glycol, 5,6-dihydrouracil and 5,6-dihydrothymine. Has AP (apurinic/apyrimidinic) lyase activity and introduces nicks in the DNA strand. Cleaves the DNA backbone by beta-delta elimination to generate a single-strand break at the site of the removed base with both 3'- and 5'-phosphates. This chain is Endonuclease 8, found in Klebsiella pneumoniae subsp. pneumoniae (strain ATCC 700721 / MGH 78578).